Reading from the N-terminus, the 89-residue chain is Small ribosomal subunit protein bS18 (89 aa).

The protein belongs to the bacterial ribosomal protein bS18 family. As to quaternary structure, part of the 30S ribosomal subunit. Forms a tight heterodimer with protein bS6.

In terms of biological role, binds as a heterodimer with protein bS6 to the central domain of the 16S rRNA, where it helps stabilize the platform of the 30S subunit. This is Small ribosomal subunit protein bS18 from Parabacteroides distasonis (strain ATCC 8503 / DSM 20701 / CIP 104284 / JCM 5825 / NCTC 11152).